Here is a 121-residue protein sequence, read N- to C-terminus: Holo-[acyl-carrier-protein] synthase (121 aa).

Residues Asp8 and Glu58 each coordinate Mg(2+).

This sequence belongs to the P-Pant transferase superfamily. AcpS family. Requires Mg(2+) as cofactor.

The protein resides in the cytoplasm. It carries out the reaction apo-[ACP] + CoA = holo-[ACP] + adenosine 3',5'-bisphosphate + H(+). In terms of biological role, transfers the 4'-phosphopantetheine moiety from coenzyme A to a Ser of acyl-carrier-protein. This Bacillus velezensis (strain DSM 23117 / BGSC 10A6 / LMG 26770 / FZB42) (Bacillus amyloliquefaciens subsp. plantarum) protein is Holo-[acyl-carrier-protein] synthase.